The chain runs to 84 residues: Small ribosomal subunit protein uS17 (84 aa).

Belongs to the universal ribosomal protein uS17 family. Part of the 30S ribosomal subunit.

Functionally, one of the primary rRNA binding proteins, it binds specifically to the 5'-end of 16S ribosomal RNA. This chain is Small ribosomal subunit protein uS17, found in Clostridium botulinum (strain 657 / Type Ba4).